We begin with the raw amino-acid sequence, 397 residues long: Xylose isomerase (397 aa).

Residues histidine 54 and aspartate 57 contribute to the active site. The Mg(2+) site is built by glutamate 181, glutamate 217, histidine 220, aspartate 245, aspartate 255, aspartate 257, and aspartate 293.

This sequence belongs to the xylose isomerase family. As to quaternary structure, homotetramer. Mg(2+) serves as cofactor.

The protein resides in the cytoplasm. The enzyme catalyses alpha-D-xylose = alpha-D-xylulofuranose. The chain is Xylose isomerase from Clavibacter sepedonicus (Clavibacter michiganensis subsp. sepedonicus).